Here is a 366-residue protein sequence, read N- to C-terminus: tRNA/tmRNA (uracil-C(5))-methyltransferase (366 aa).

S-adenosyl-L-methionine is bound by residues glutamine 190, tyrosine 218, asparagine 223, glutamate 239, and aspartate 299. Cysteine 324 acts as the Nucleophile in catalysis. Residue glutamate 358 is the Proton acceptor of the active site.

It belongs to the class I-like SAM-binding methyltransferase superfamily. RNA M5U methyltransferase family. TrmA subfamily.

The enzyme catalyses uridine(54) in tRNA + S-adenosyl-L-methionine = 5-methyluridine(54) in tRNA + S-adenosyl-L-homocysteine + H(+). It carries out the reaction uridine(341) in tmRNA + S-adenosyl-L-methionine = 5-methyluridine(341) in tmRNA + S-adenosyl-L-homocysteine + H(+). Its function is as follows. Dual-specificity methyltransferase that catalyzes the formation of 5-methyluridine at position 54 (m5U54) in all tRNAs, and that of position 341 (m5U341) in tmRNA (transfer-mRNA). The sequence is that of tRNA/tmRNA (uracil-C(5))-methyltransferase from Edwardsiella ictaluri (strain 93-146).